We begin with the raw amino-acid sequence, 399 residues long: Tryptophan synthase beta chain (399 aa).

Lys92 is subject to N6-(pyridoxal phosphate)lysine.

The protein belongs to the TrpB family. Tetramer of two alpha and two beta chains. The cofactor is pyridoxal 5'-phosphate.

It catalyses the reaction (1S,2R)-1-C-(indol-3-yl)glycerol 3-phosphate + L-serine = D-glyceraldehyde 3-phosphate + L-tryptophan + H2O. It participates in amino-acid biosynthesis; L-tryptophan biosynthesis; L-tryptophan from chorismate: step 5/5. The beta subunit is responsible for the synthesis of L-tryptophan from indole and L-serine. In Acidithiobacillus ferrooxidans (strain ATCC 23270 / DSM 14882 / CIP 104768 / NCIMB 8455) (Ferrobacillus ferrooxidans (strain ATCC 23270)), this protein is Tryptophan synthase beta chain.